Reading from the N-terminus, the 141-residue chain is Large ribosomal subunit protein uL11 (141 aa).

Belongs to the universal ribosomal protein uL11 family. Part of the ribosomal stalk of the 50S ribosomal subunit. Interacts with L10 and the large rRNA to form the base of the stalk. L10 forms an elongated spine to which L12 dimers bind in a sequential fashion forming a multimeric L10(L12)X complex. One or more lysine residues are methylated.

Its function is as follows. Forms part of the ribosomal stalk which helps the ribosome interact with GTP-bound translation factors. The chain is Large ribosomal subunit protein uL11 from Thermotoga petrophila (strain ATCC BAA-488 / DSM 13995 / JCM 10881 / RKU-1).